We begin with the raw amino-acid sequence, 701 residues long: Elongation factor G 1 (701 aa).

A tr-type G domain is found at 8 to 290 (VRYRNIGICA…AVVEYLPAPT (283 aa)). GTP-binding positions include 17-24 (AHVDAGKT), 88-92 (DTPGH), and 142-145 (NKMD).

It belongs to the TRAFAC class translation factor GTPase superfamily. Classic translation factor GTPase family. EF-G/EF-2 subfamily.

Its subcellular location is the cytoplasm. In terms of biological role, catalyzes the GTP-dependent ribosomal translocation step during translation elongation. During this step, the ribosome changes from the pre-translocational (PRE) to the post-translocational (POST) state as the newly formed A-site-bound peptidyl-tRNA and P-site-bound deacylated tRNA move to the P and E sites, respectively. Catalyzes the coordinated movement of the two tRNA molecules, the mRNA and conformational changes in the ribosome. This Saccharophagus degradans (strain 2-40 / ATCC 43961 / DSM 17024) protein is Elongation factor G 1.